We begin with the raw amino-acid sequence, 74 residues long: MPRYYEDKPEGGACAGVKEDLGACLLQSACVLQEGKSPRQCLKEGNCRALQYSFFECKRSMLDARSRFRGRKGY.

Positions 27–65 (QSACVLQEGKSPRQCLKEGNCRALQYSFFECKRSMLDAR) constitute a CHCH domain. Residues 30–41 (CVLQEGKSPRQC) carry the Cx10C motif motif. Cystine bridges form between Cys30–Cys57 and Cys41–Cys47. The residue at position 37 (Ser37) is a Phosphoserine. The short motif at 47 to 57 (CRALQYSFFEC) is the Cx9C motif element.

It belongs to the PET191 family.

Involved in an early step of the mitochondrial complex IV assembly process. The polypeptide is Cytochrome c oxidase assembly factor 5 (Coa5) (Mus musculus (Mouse)).